Here is an 81-residue protein sequence, read N- to C-terminus: ATP synthase subunit c (81 aa).

The next 2 helical transmembrane spans lie at 7–27 (AASVLAAALAVGLAAIGPGIG) and 57–77 (LAFMEALTIYGLVVALVLLFA).

It belongs to the ATPase C chain family. In terms of assembly, F-type ATPases have 2 components, F(1) - the catalytic core - and F(0) - the membrane proton channel. F(1) has five subunits: alpha(3), beta(3), gamma(1), delta(1), epsilon(1). F(0) has four main subunits: a(1), b(1), b'(1) and c(10-14). The alpha and beta chains form an alternating ring which encloses part of the gamma chain. F(1) is attached to F(0) by a central stalk formed by the gamma and epsilon chains, while a peripheral stalk is formed by the delta, b and b' chains.

It is found in the cellular thylakoid membrane. In terms of biological role, f(1)F(0) ATP synthase produces ATP from ADP in the presence of a proton or sodium gradient. F-type ATPases consist of two structural domains, F(1) containing the extramembraneous catalytic core and F(0) containing the membrane proton channel, linked together by a central stalk and a peripheral stalk. During catalysis, ATP synthesis in the catalytic domain of F(1) is coupled via a rotary mechanism of the central stalk subunits to proton translocation. Key component of the F(0) channel; it plays a direct role in translocation across the membrane. A homomeric c-ring of between 10-14 subunits forms the central stalk rotor element with the F(1) delta and epsilon subunits. The sequence is that of ATP synthase subunit c from Synechococcus elongatus (strain ATCC 33912 / PCC 7942 / FACHB-805) (Anacystis nidulans R2).